The following is a 384-amino-acid chain: Queuine tRNA-ribosyltransferase (384 aa).

Asp-93 acts as the Proton acceptor in catalysis. Substrate is bound by residues 93–97 (DSGGF), Asp-147, Gln-202, and Gly-229. The interval 260-266 (GVGYPEE) is RNA binding. The active-site Nucleophile is the Asp-279. The interval 284-288 (TRAAR) is RNA binding; important for wobble base 34 recognition. Residues Cys-317, Cys-319, Cys-322, and His-348 each contribute to the Zn(2+) site.

Belongs to the queuine tRNA-ribosyltransferase family. In terms of assembly, homodimer. Within each dimer, one monomer is responsible for RNA recognition and catalysis, while the other monomer binds to the replacement base PreQ1. Requires Zn(2+) as cofactor.

The catalysed reaction is 7-aminomethyl-7-carbaguanine + guanosine(34) in tRNA = 7-aminomethyl-7-carbaguanosine(34) in tRNA + guanine. Its pathway is tRNA modification; tRNA-queuosine biosynthesis. Catalyzes the base-exchange of a guanine (G) residue with the queuine precursor 7-aminomethyl-7-deazaguanine (PreQ1) at position 34 (anticodon wobble position) in tRNAs with GU(N) anticodons (tRNA-Asp, -Asn, -His and -Tyr). Catalysis occurs through a double-displacement mechanism. The nucleophile active site attacks the C1' of nucleotide 34 to detach the guanine base from the RNA, forming a covalent enzyme-RNA intermediate. The proton acceptor active site deprotonates the incoming PreQ1, allowing a nucleophilic attack on the C1' of the ribose to form the product. After dissociation, two additional enzymatic reactions on the tRNA convert PreQ1 to queuine (Q), resulting in the hypermodified nucleoside queuosine (7-(((4,5-cis-dihydroxy-2-cyclopenten-1-yl)amino)methyl)-7-deazaguanosine). The polypeptide is Queuine tRNA-ribosyltransferase (Koribacter versatilis (strain Ellin345)).